The primary structure comprises 453 residues: Trigger factor (453 aa).

Residues 171-256 (GDRITISFKG…VSLIEAPEEL (86 aa)) form the PPIase FKBP-type domain.

The protein belongs to the FKBP-type PPIase family. Tig subfamily.

It localises to the cytoplasm. The catalysed reaction is [protein]-peptidylproline (omega=180) = [protein]-peptidylproline (omega=0). Involved in protein export. Acts as a chaperone by maintaining the newly synthesized protein in an open conformation. Functions as a peptidyl-prolyl cis-trans isomerase. The chain is Trigger factor from Nitrobacter winogradskyi (strain ATCC 25391 / DSM 10237 / CIP 104748 / NCIMB 11846 / Nb-255).